The primary structure comprises 306 residues: Pantothenate kinase (306 aa).

90 to 97 (GSVAVGKS) provides a ligand contact to ATP.

This sequence belongs to the prokaryotic pantothenate kinase family.

It is found in the cytoplasm. It catalyses the reaction (R)-pantothenate + ATP = (R)-4'-phosphopantothenate + ADP + H(+). It functions in the pathway cofactor biosynthesis; coenzyme A biosynthesis; CoA from (R)-pantothenate: step 1/5. The chain is Pantothenate kinase from Lactococcus lactis subsp. cremoris (strain SK11).